Reading from the N-terminus, the 179-residue chain is uncharacterized protein (179 aa).

The chain crosses the membrane as a helical span at residues 5–25 (MLAGIGIGVAAALGVAAVASL).

To Rickettsia 17 kDa surface antigen.

It localises to the membrane. This is an uncharacterized protein from Escherichia coli O6:H1 (strain CFT073 / ATCC 700928 / UPEC).